The chain runs to 145 residues: D-aminoacyl-tRNA deacylase (145 aa).

Residues 137-138 (GP) carry the Gly-cisPro motif, important for rejection of L-amino acids motif.

Belongs to the DTD family. In terms of assembly, homodimer.

The protein resides in the cytoplasm. It catalyses the reaction glycyl-tRNA(Ala) + H2O = tRNA(Ala) + glycine + H(+). It carries out the reaction a D-aminoacyl-tRNA + H2O = a tRNA + a D-alpha-amino acid + H(+). An aminoacyl-tRNA editing enzyme that deacylates mischarged D-aminoacyl-tRNAs. Also deacylates mischarged glycyl-tRNA(Ala), protecting cells against glycine mischarging by AlaRS. Acts via tRNA-based rather than protein-based catalysis; rejects L-amino acids rather than detecting D-amino acids in the active site. By recycling D-aminoacyl-tRNA to D-amino acids and free tRNA molecules, this enzyme counteracts the toxicity associated with the formation of D-aminoacyl-tRNA entities in vivo and helps enforce protein L-homochirality. This chain is D-aminoacyl-tRNA deacylase, found in Salmonella typhimurium (strain LT2 / SGSC1412 / ATCC 700720).